An 824-amino-acid chain; its full sequence is Intraflagellar transport protein 88 homolog (824 aa).

Residues 113–134 form a disordered region; it reads FDPLSQSRGPASPLEAKKKDSP. TPR repeat units follow at residues 197–230, 233–266, 272–305, 307–338, 415–448, 450–483, 484–517, 518–551, 552–585, 586–619, 620–653, and 654–687; these read YSVL…KMFS, GILK…VPSV, IKIM…APNL, AGYN…PLEI, NDLE…DSRV, SAAA…DRYN, PAAL…DSSC, TEAL…LRNS, AEVL…IPTD, PQVL…FPCN, IEVI…QPTQ, and VKWQ…FPEN. The segment at 724–824 is disordered; that stretch reads EQRIKSGRDG…EELGDDLLPE (101 aa). Positions 748 to 757 are enriched in polar residues; sequence DSGQNYSASS. Over residues 797 to 808 the composition is skewed to basic and acidic residues; it reads ERPKTAAKKRID. Over residues 809–824 the composition is skewed to acidic residues; the sequence is EDDFADEELGDDLLPE.

Component of the IFT complex B, at least composed of IFT20, IFT22, IFT25, IFT27, IFT46, IFT52, TRAF3IP1/IFT54, IFT57, IFT74, IFT80, IFT81, and IFT88. Interacts with IFT20, IFT22, IFT25, IFT27, IFT52, TRAF3IP1, IFT74, IFT80 and IFT81. Interacts with IFT172. Interacts with IFT57. Interacts with IFT46. Interacts with IFT70B. Interacts with C2CD3. Interacts with ENTR1 (via N-terminus). Interacts with LRRC56. Interacts with DZIP1. Interacts with CCDC38. Interacts with CCDC146. Interacts with CFAP53. As to expression, expressed in the heart, brain, liver, lung, kidney, skeletal muscle and pancreas.

The protein localises to the cytoplasm. It is found in the cytoskeleton. It localises to the microtubule organizing center. The protein resides in the centrosome. Its subcellular location is the centriole. The protein localises to the cell projection. It is found in the cilium. It localises to the cilium basal body. The protein resides in the flagellum. Positively regulates primary cilium biogenesis. Also involved in autophagy since it is required for trafficking of ATG16L and the expansion of the autophagic compartment. In Homo sapiens (Human), this protein is Intraflagellar transport protein 88 homolog (IFT88).